Here is a 310-residue protein sequence, read N- to C-terminus: Aspartate carbamoyltransferase catalytic subunit 1 (310 aa).

Residues arginine 55 and threonine 56 each coordinate carbamoyl phosphate. Lysine 85 is a binding site for L-aspartate. Carbamoyl phosphate is bound by residues arginine 106, histidine 134, and glutamine 137. Residues arginine 167 and arginine 228 each coordinate L-aspartate. Carbamoyl phosphate contacts are provided by leucine 266 and proline 267.

This sequence belongs to the aspartate/ornithine carbamoyltransferase superfamily. ATCase family. In terms of assembly, heterododecamer (2C3:3R2) of six catalytic PyrB chains organized as two trimers (C3), and six regulatory PyrI chains organized as three dimers (R2).

It catalyses the reaction carbamoyl phosphate + L-aspartate = N-carbamoyl-L-aspartate + phosphate + H(+). It functions in the pathway pyrimidine metabolism; UMP biosynthesis via de novo pathway; (S)-dihydroorotate from bicarbonate: step 2/3. Its function is as follows. Catalyzes the condensation of carbamoyl phosphate and aspartate to form carbamoyl aspartate and inorganic phosphate, the committed step in the de novo pyrimidine nucleotide biosynthesis pathway. This is Aspartate carbamoyltransferase catalytic subunit 1 from Shewanella halifaxensis (strain HAW-EB4).